We begin with the raw amino-acid sequence, 98 residues long: NADH-ubiquinone oxidoreductase chain 4L (98 aa).

3 consecutive transmembrane segments (helical) span residues 2 to 22, 29 to 49, and 61 to 81; these read PSIF…TLVF, SLLC…LIIL, and ILLL…LVMV.

This sequence belongs to the complex I subunit 4L family. In terms of assembly, core subunit of respiratory chain NADH dehydrogenase (Complex I) which is composed of 45 different subunits.

It localises to the mitochondrion inner membrane. The catalysed reaction is a ubiquinone + NADH + 5 H(+)(in) = a ubiquinol + NAD(+) + 4 H(+)(out). Functionally, core subunit of the mitochondrial membrane respiratory chain NADH dehydrogenase (Complex I) which catalyzes electron transfer from NADH through the respiratory chain, using ubiquinone as an electron acceptor. Part of the enzyme membrane arm which is embedded in the lipid bilayer and involved in proton translocation. This is NADH-ubiquinone oxidoreductase chain 4L (MT-ND4L) from Propithecus diadema diadema (Diademed sifaka).